An 80-amino-acid chain; its full sequence is Large ribosomal subunit protein uL24 (80 aa).

Positions 53–80 are disordered; the sequence is HMRPTQGQTQGSIIEREFPIHSSNVKKS.

The protein belongs to the universal ribosomal protein uL24 family. Part of the 50S ribosomal subunit.

Functionally, one of two assembly initiator proteins, it binds directly to the 5'-end of the 23S rRNA, where it nucleates assembly of the 50S subunit. Its function is as follows. One of the proteins that surrounds the polypeptide exit tunnel on the outside of the subunit. The protein is Large ribosomal subunit protein uL24 of Pelodictyon phaeoclathratiforme (strain DSM 5477 / BU-1).